A 163-amino-acid chain; its full sequence is Phosphopantetheine adenylyltransferase (163 aa).

Ser-9 is a substrate binding site. ATP contacts are provided by residues 9–10 (SF) and His-17. 3 residues coordinate substrate: Lys-41, Val-78, and Arg-92. Residues 93–95 (GLR), Glu-103, and 128–134 (SRPITAT) contribute to the ATP site.

Belongs to the bacterial CoaD family. In terms of assembly, homohexamer. Requires Mg(2+) as cofactor.

It localises to the cytoplasm. It catalyses the reaction (R)-4'-phosphopantetheine + ATP + H(+) = 3'-dephospho-CoA + diphosphate. Its pathway is cofactor biosynthesis; coenzyme A biosynthesis; CoA from (R)-pantothenate: step 4/5. Functionally, reversibly transfers an adenylyl group from ATP to 4'-phosphopantetheine, yielding dephospho-CoA (dPCoA) and pyrophosphate. The chain is Phosphopantetheine adenylyltransferase from Rhizobium meliloti (strain 1021) (Ensifer meliloti).